Reading from the N-terminus, the 43-residue chain is Protein PsbN (43 aa).

The helical transmembrane segment at 4-24 threads the bilayer; the sequence is GILVVIFISCLLVSFTGYTIY.

Belongs to the PsbN family.

Its subcellular location is the plastid. The protein resides in the chloroplast thylakoid membrane. May play a role in photosystem I and II biogenesis. In Chaetosphaeridium globosum (Charophycean green alga), this protein is Protein PsbN.